The primary structure comprises 288 residues: Acetyl-coenzyme A carboxylase carboxyl transferase subunit beta (288 aa).

Residues 32 to 288 (LFAKCPACKH…LELHTEVENV (257 aa)) enclose the CoA carboxyltransferase N-terminal domain. C36, C39, C54, and C57 together coordinate Zn(2+). The C4-type zinc-finger motif lies at 36-57 (CPACKHTIYQKDLGKNKVCPNC).

The protein belongs to the AccD/PCCB family. As to quaternary structure, acetyl-CoA carboxylase is a heterohexamer composed of biotin carboxyl carrier protein (AccB), biotin carboxylase (AccC) and two subunits each of ACCase subunit alpha (AccA) and ACCase subunit beta (AccD). Zn(2+) is required as a cofactor.

It is found in the cytoplasm. It catalyses the reaction N(6)-carboxybiotinyl-L-lysyl-[protein] + acetyl-CoA = N(6)-biotinyl-L-lysyl-[protein] + malonyl-CoA. Its pathway is lipid metabolism; malonyl-CoA biosynthesis; malonyl-CoA from acetyl-CoA: step 1/1. Its function is as follows. Component of the acetyl coenzyme A carboxylase (ACC) complex. Biotin carboxylase (BC) catalyzes the carboxylation of biotin on its carrier protein (BCCP) and then the CO(2) group is transferred by the transcarboxylase to acetyl-CoA to form malonyl-CoA. In Lactococcus lactis subsp. cremoris (strain MG1363), this protein is Acetyl-coenzyme A carboxylase carboxyl transferase subunit beta.